We begin with the raw amino-acid sequence, 314 residues long: Olfactory receptor 52K1 (314 aa).

Over 1-27 (MLPSNITSTHPAVFLLVGIPGLEHLHA) the chain is Extracellular. Asn-5 is a glycosylation site (N-linked (GlcNAc...) asparagine). Residues 28 to 48 (WISIPFCFAYTLALLGNCTLL) form a helical membrane-spanning segment. The Cytoplasmic portion of the chain corresponds to 49 to 56 (FIIQADAA). A helical transmembrane segment spans residues 57–77 (LHEPMYLFLAMLATIDLVLSS). Topologically, residues 78 to 101 (TTLPKMLAIFWFRDQEINFFACLV) are extracellular. Cys-99 and Cys-191 are oxidised to a cystine. The helical transmembrane segment at 102–122 (QMFFLHSFSIMESAVLLAMAF) threads the bilayer. Residues 123 to 141 (DRYVAICKPLHYTTVLTGS) lie on the Cytoplasmic side of the membrane. Residues 142-162 (LITKIGMAAVARAVTLMTPLP) form a helical membrane-spanning segment. At 163–198 (FLLRRFHYCRGPVIAHCYCEHMAVVRLACGDTSFNN) the chain is on the extracellular side. Residues 199-219 (IYGIAVAMFIVVLDLLFVILS) form a helical membrane-spanning segment. The Cytoplasmic segment spans residues 220-239 (YVFILQAVLQLASQEARYKA). A helical transmembrane segment spans residues 240-260 (FGTCVSHIGAILSTYTPVVIS). Residues 261–275 (SVMHRVARHAAPRVH) are Extracellular-facing. The chain crosses the membrane as a helical span at residues 276 to 296 (ILLAIFYLLFPPMVNPIIYGV). The Cytoplasmic portion of the chain corresponds to 297 to 314 (KTKQIREYVLSLFQRKNM).

This sequence belongs to the G-protein coupled receptor 1 family.

It localises to the cell membrane. Functionally, odorant receptor. The chain is Olfactory receptor 52K1 (OR52K1) from Homo sapiens (Human).